The sequence spans 268 residues: Tryptophan synthase alpha chain (268 aa).

Active-site proton acceptor residues include E40 and D51.

The protein belongs to the TrpA family. Tetramer of two alpha and two beta chains.

It carries out the reaction (1S,2R)-1-C-(indol-3-yl)glycerol 3-phosphate + L-serine = D-glyceraldehyde 3-phosphate + L-tryptophan + H2O. It participates in amino-acid biosynthesis; L-tryptophan biosynthesis; L-tryptophan from chorismate: step 5/5. In terms of biological role, the alpha subunit is responsible for the aldol cleavage of indoleglycerol phosphate to indole and glyceraldehyde 3-phosphate. The chain is Tryptophan synthase alpha chain from Geobacillus thermodenitrificans (strain NG80-2).